An 80-amino-acid polypeptide reads, in one-letter code: Acyl carrier protein (80 aa).

One can recognise a Carrier domain in the interval 4–79 (EEILQKVCSI…DAVKFIEEKK (76 aa)). An O-(pantetheine 4'-phosphoryl)serine modification is found at Ser-39.

The protein belongs to the acyl carrier protein (ACP) family. Post-translationally, 4'-phosphopantetheine is transferred from CoA to a specific serine of apo-ACP by AcpS. This modification is essential for activity because fatty acids are bound in thioester linkage to the sulfhydryl of the prosthetic group.

The protein resides in the cytoplasm. It participates in lipid metabolism; fatty acid biosynthesis. Its function is as follows. Carrier of the growing fatty acid chain in fatty acid biosynthesis. The polypeptide is Acyl carrier protein (Prochlorococcus marinus subsp. pastoris (strain CCMP1986 / NIES-2087 / MED4)).